The primary structure comprises 408 residues: MSKRDIVLTNVTVVQLLRQPCPVTRAPPPPEPKAEVEPQPQPEPTPVREEIKPPPPPLPPHPATPPPKMVSVARELTVGINGFGRIGRLVLRACMEKGVKVVAVNDPFIDPEYMVYMFKYDSTHGRYKGSVEFRNGQLVVDNHEISVYQCKEPKQIPWRAVGSPYVVESTGVYLSIQAASDHISAGAQRVVISAPSPDAPMFVMGVNENDYNPGSMNIVSNASCTTNCLAPLAKVIHERFGIVEGLMTTVHSYTATQKTVDGPSRKAWRDGRGAHQNIIPASTGAAKAVTKVIPELKGKLTGMAFRVPTPDVSVVDLTCRLAQPAPYSAIKEAVKAAAKGPMAGILAYTEDEVVSTDFLGDTHSSIFDAKAGIALNDNFVKLISWYDNEYGYSHRVVDLLRYMFSRDK.

Residues M1–A73 are testis-specific N-terminal extension. A disordered region spans residues Q19–K68. The segment covering P53–K68 has biased composition (pro residues). NAD(+)-binding positions include R85–I86, D106, K151, Y173, and S193. D-glyceraldehyde 3-phosphate is bound by residues S223–T225, T254, T283–G284, and R306. C224 functions as the Nucleophile in the catalytic mechanism. Residue N388 coordinates NAD(+).

This sequence belongs to the glyceraldehyde-3-phosphate dehydrogenase family. Homotetramer. Interacts with ARRB2; the interaction is detected in the nucleus upon OR1D2 stimulation. As to expression, testis specific.

Its subcellular location is the cytoplasm. It catalyses the reaction D-glyceraldehyde 3-phosphate + phosphate + NAD(+) = (2R)-3-phospho-glyceroyl phosphate + NADH + H(+). It functions in the pathway carbohydrate degradation; glycolysis; pyruvate from D-glyceraldehyde 3-phosphate: step 1/5. May play an important role in regulating the switch between different pathways for energy production during spermiogenesis and in the spermatozoon. Required for sperm motility and male fertility. The polypeptide is Glyceraldehyde-3-phosphate dehydrogenase, testis-specific (GAPDHS) (Homo sapiens (Human)).